The sequence spans 379 residues: Sporozoite surface protein P36 (379 aa).

An N-terminal signal peptide occupies residues 1 to 33; it reads MAYNIWEEYIMANFHNVYPVVTNLFLFIALSYS. 2 6-Cys domains span residues 69-206 and 215-379; these read FVFF…VKAN and FIKG…TVES. 3 disulfides stabilise this stretch: Cys91–Cys101, Cys115–Cys186, and Cys129–Cys184. Asn98 and Asn118 each carry an N-linked (GlcNAc...) asparagine glycan. An N-linked (GlcNAc...) asparagine glycan is attached at Asn206. Cystine bridges form between Cys219-Cys243, Cys257-Cys360, and Cys295-Cys358. N-linked (GlcNAc...) asparagine glycans are attached at residues Asn298 and Asn374.

Its subcellular location is the cell surface. The protein localises to the cell membrane. Functionally, involved in sporozoite infection of hepatocytes and replication therein. The chain is Sporozoite surface protein P36 (PF36) from Plasmodium falciparum (isolate 3D7).